Here is a 171-residue protein sequence, read N- to C-terminus: 3-hydroxydecanoyl-[acyl-carrier-protein] dehydratase (171 aa).

Histidine 70 is an active-site residue.

Belongs to the thioester dehydratase family. FabA subfamily. As to quaternary structure, homodimer.

Its subcellular location is the cytoplasm. The enzyme catalyses a (3R)-hydroxyacyl-[ACP] = a (2E)-enoyl-[ACP] + H2O. It carries out the reaction (3R)-hydroxydecanoyl-[ACP] = (2E)-decenoyl-[ACP] + H2O. The catalysed reaction is (2E)-decenoyl-[ACP] = (3Z)-decenoyl-[ACP]. Its pathway is lipid metabolism; fatty acid biosynthesis. Its function is as follows. Necessary for the introduction of cis unsaturation into fatty acids. Catalyzes the dehydration of (3R)-3-hydroxydecanoyl-ACP to E-(2)-decenoyl-ACP and then its isomerization to Z-(3)-decenoyl-ACP. Can catalyze the dehydratase reaction for beta-hydroxyacyl-ACPs with saturated chain lengths up to 16:0, being most active on intermediate chain length. This chain is 3-hydroxydecanoyl-[acyl-carrier-protein] dehydratase, found in Chromohalobacter salexigens (strain ATCC BAA-138 / DSM 3043 / CIP 106854 / NCIMB 13768 / 1H11).